The sequence spans 520 residues: Cytochrome P450 monooxygenase TRI4 (520 aa).

The helical transmembrane segment at L10 to F30 threads the bilayer. N447 carries N-linked (GlcNAc...) asparagine glycosylation. Position 455 (C455) interacts with heme.

Belongs to the cytochrome P450 family. It depends on heme as a cofactor.

The protein resides in the membrane. It functions in the pathway sesquiterpene biosynthesis; trichothecene biosynthesis. Functionally, cytochrome P450 monooxygenase; part of the core gene cluster that mediates the biosynthesis of trichothecenes, a very large family of chemically related bicyclic sesquiterpene compounds acting as mycotoxins, including T2-toxin. The biosynthesis of trichothecenes begins with the cyclization of farnesyl diphosphate to trichodiene and is catalyzed by the trichodiene synthase TRI5. Trichodiene undergoes a series of oxygenations catalyzed by the cytochrome P450 monooxygenase TRI4. TRI4 controls the addition of four oxygens at C-2, C-3, C-11, and the C-12, C-13-epoxide to form the intermediate isotrichotriol. Isotrichotriol then undergoes a non-enzymatic isomerization and cyclization to form isotrichodermol. During this process, the oxygen at the C-2 position becomes the pyran ring oxygen and the hydroxyl group at C-11 is lost. More complex type A trichothecenes are built by modifying isotrichodermol through a series of paired hydroxylation and acetylation or acylation steps. Isotrichodermol is converted to isotrichodermin by the acetyltransferase TRI101. TRI101 encodes a C-3 transacetylase that acts as a self-protection or resistance factor during biosynthesis and that the presence of a free C-3 hydroxyl group is a key component of Fusarium trichothecene phytotoxicity. A second hydroxyl group is added to C-15 by the trichothecene C-15 hydroxylase TRI11, producing 15-decalonectrin, which is then acetylated by TRI3, producing calonectrin. A third hydroxyl group is added at C-4 by the cytochrome P450 monooxygenase TRI13, converting calonectrin to 3,15-diacetoxyspirpenol, which is subsequently acetylated by the acetyltransferase TRI7. A fourth hydroxyl group is added to C-8 by the cytochrome P450 monooxygenase TRI1, followed by the addition of an isovaleryl moiety by TRI16. Finally, the acetyl group is removed from the C-3 position by the trichothecene C-3 esterase TRI8 to produce T-2 toxin. This is Cytochrome P450 monooxygenase TRI4 from Fusarium sporotrichioides.